The primary structure comprises 61 residues: UPF0434 protein Bfl377 (61 aa).

This sequence belongs to the UPF0434 family.

The protein is UPF0434 protein Bfl377 of Blochmanniella floridana.